Here is a 131-residue protein sequence, read N- to C-terminus: UPF0102 protein YraN (131 aa).

Over residues 1–19 (MATVPTRSGSPRQLTTKQT) the composition is skewed to polar residues. The segment at 1–21 (MATVPTRSGSPRQLTTKQTGD) is disordered.

The protein belongs to the UPF0102 family.

The chain is UPF0102 protein YraN from Shigella flexneri serotype 5b (strain 8401).